A 1090-amino-acid polypeptide reads, in one-letter code: UPF0507 protein SCRG_01893 (1090 aa).

The VPS9 domain occupies 289–436; the sequence is FSVNQLLTDF…FEDFNKNTGN (148 aa).

This sequence belongs to the UPF0507 family.

The protein is UPF0507 protein SCRG_01893 of Saccharomyces cerevisiae (strain RM11-1a) (Baker's yeast).